A 97-amino-acid polypeptide reads, in one-letter code: uncharacterized protein (97 aa).

Residues 1 to 24 (MTQKNGADRPDDYKRFSSLDKEYD) are compositionally biased toward basic and acidic residues. The segment at 1 to 97 (MTQKNGADRP…FEGTIDQNLD (97 aa)) is disordered. The span at 31-43 (SNTETESVNTETQ) shows a compositional bias: low complexity. Residues 44-53 (THNKENKNDT) are compositionally biased toward basic and acidic residues.

This is an uncharacterized protein from Bacillus subtilis (strain 168).